The sequence spans 402 residues: Putative cystathionine beta-lyase (402 aa).

Lys236 bears the N6-(pyridoxal phosphate)lysine mark.

The protein belongs to the class-II pyridoxal-phosphate-dependent aminotransferase family. MalY/PatB cystathionine beta-lyase subfamily. Pyridoxal 5'-phosphate serves as cofactor.

It catalyses the reaction L,L-cystathionine + H2O = L-homocysteine + pyruvate + NH4(+). The enzyme catalyses an S-substituted L-cysteine + H2O = a thiol + pyruvate + NH4(+). The protein operates within amino-acid biosynthesis; L-methionine biosynthesis via de novo pathway; L-homocysteine from L-cystathionine: step 1/1. The protein is Putative cystathionine beta-lyase of Mycobacterium leprae (strain TN).